Consider the following 262-residue polypeptide: Short-chain reductase protein NovJ (262 aa).

NADP(+)-binding positions include 23 to 26 (GAGR) and 73 to 74 (DV). Substrate is bound at residue S152. Catalysis depends on Y164, which acts as the Proton acceptor. 164-168 (YATAK) contributes to the NADP(+) binding site.

It belongs to the short-chain dehydrogenases/reductases (SDR) family. In terms of assembly, heterotetramer; the NovJ(2)K(2) heterotetramer is composed of subunits of 2 NovJ and 2 subunits of NovK.

Its pathway is antibiotic biosynthesis; novobiocin biosynthesis. Catalytic subunit of the NovJ(2)K(2) heterotetramer that catalyzes the NADPH-dependent reduction of the tyrosyl moiety of L-beta-OH-Tyr-S-NovH intermediate to yield the tethered beta-ketotyrosyl-S-NovH in the novobiocin biosynthesis pathway. Novobiocin is an aminocoumarin family antibiotic that targets bacterial DNA gyrases. The protein is Short-chain reductase protein NovJ (novJ) of Streptomyces niveus (Streptomyces spheroides).